The following is a 216-amino-acid chain: Snake venom metalloproteinase HT-1 (216 aa).

One can recognise a Disintegrin domain in the interval 8–94 (PPVCGNELLE…DCPMDDFHRN (87 aa)). Ca(2+) contacts are provided by valine 10, asparagine 13, leucine 15, glutamate 17, glutamate 20, and aspartate 23. 14 disulfides stabilise this stretch: cysteine 11–cysteine 40, cysteine 22–cysteine 35, cysteine 24–cysteine 30, cysteine 34–cysteine 57, cysteine 48–cysteine 54, cysteine 53–cysteine 79, cysteine 66–cysteine 86, cysteine 73–cysteine 105, cysteine 98–cysteine 110, cysteine 117–cysteine 167, cysteine 132–cysteine 178, cysteine 145–cysteine 155, cysteine 162–cysteine 204, and cysteine 198–cysteine 209. The D/ECD-tripeptide motif lies at 72–74 (ECD). Asparagine 175 carries N-linked (GlcNAc...) asparagine glycosylation.

The protein belongs to the venom metalloproteinase (M12B) family. P-III subfamily. P-IIIa sub-subfamily. As to quaternary structure, monomer. Zn(2+) serves as cofactor. As to expression, expressed by the venom gland.

It is found in the secreted. In terms of biological role, zinc protease from snake venom that induces hemorrhage. The protein is Snake venom metalloproteinase HT-1 of Crotalus ruber ruber (Red diamond rattlesnake).